A 302-amino-acid polypeptide reads, in one-letter code: Exodeoxyribonuclease (302 aa).

The enzyme catalyses Exonucleolytic cleavage in the 5'- to 3'-direction to yield nucleoside 5'-phosphates.. In terms of biological role, this enzyme is essential for phage DNA replication; it is believed to function in the removal of DNA-linked RNA primers. It is also necessary for host DNA degradation and phage genetic recombination. This chain is Exodeoxyribonuclease (6), found in Enterobacteria phage T3 (Bacteriophage T3).